Reading from the N-terminus, the 301-residue chain is Glycine--tRNA ligase alpha subunit (301 aa).

This sequence belongs to the class-II aminoacyl-tRNA synthetase family. Tetramer of two alpha and two beta subunits.

The protein localises to the cytoplasm. The catalysed reaction is tRNA(Gly) + glycine + ATP = glycyl-tRNA(Gly) + AMP + diphosphate. The chain is Glycine--tRNA ligase alpha subunit from Nitrosospira multiformis (strain ATCC 25196 / NCIMB 11849 / C 71).